A 369-amino-acid chain; its full sequence is Uroporphyrinogen decarboxylase (369 aa).

Residues 1–26 (MPVLHVDARPGSGPGGVSPPPSGAAL) are disordered. Residues 56-60 (RQAGR), D105, Y180, S235, and H348 contribute to the substrate site.

It belongs to the uroporphyrinogen decarboxylase family. As to quaternary structure, homodimer.

The protein localises to the cytoplasm. The catalysed reaction is uroporphyrinogen III + 4 H(+) = coproporphyrinogen III + 4 CO2. It participates in porphyrin-containing compound metabolism; protoporphyrin-IX biosynthesis; coproporphyrinogen-III from 5-aminolevulinate: step 4/4. Functionally, catalyzes the decarboxylation of four acetate groups of uroporphyrinogen-III to yield coproporphyrinogen-III. The polypeptide is Uroporphyrinogen decarboxylase (Frankia casuarinae (strain DSM 45818 / CECT 9043 / HFP020203 / CcI3)).